The sequence spans 417 residues: Serine hydroxymethyltransferase (417 aa).

Residues L121 and 125–127 (GHL) contribute to the (6S)-5,6,7,8-tetrahydrofolate site. An N6-(pyridoxal phosphate)lysine modification is found at K229. 355–357 (SPF) contributes to the (6S)-5,6,7,8-tetrahydrofolate binding site.

This sequence belongs to the SHMT family. In terms of assembly, homodimer. Requires pyridoxal 5'-phosphate as cofactor.

The protein localises to the cytoplasm. The catalysed reaction is (6R)-5,10-methylene-5,6,7,8-tetrahydrofolate + glycine + H2O = (6S)-5,6,7,8-tetrahydrofolate + L-serine. It functions in the pathway one-carbon metabolism; tetrahydrofolate interconversion. Its pathway is amino-acid biosynthesis; glycine biosynthesis; glycine from L-serine: step 1/1. Catalyzes the reversible interconversion of serine and glycine with tetrahydrofolate (THF) serving as the one-carbon carrier. This reaction serves as the major source of one-carbon groups required for the biosynthesis of purines, thymidylate, methionine, and other important biomolecules. Also exhibits THF-independent aldolase activity toward beta-hydroxyamino acids, producing glycine and aldehydes, via a retro-aldol mechanism. The polypeptide is Serine hydroxymethyltransferase (Shewanella baltica (strain OS155 / ATCC BAA-1091)).